Consider the following 179-residue polypeptide: Stathmin-2 (179 aa).

Residues 1–26 (MAKTAMAYKEKMKELSMLSLICSCFY) are membrane attachment. A Phosphoserine modification is found at Ser16. 2 S-palmitoyl cysteine lipidation sites follow: Cys22 and Cys24. The region spanning 38–179 (DDMEVKQINK…NKELQVELSG (142 aa)) is the SLD domain. Residues 39–96 (DMEVKQINKRASGQAFELILKPPSPISEAPRTLASPKKKDLSLEEIQKKLEAAEERRK) are regulatory/phosphorylation domain. A phosphoserine mark is found at Ser50, Ser62, Ser73, and Ser97. Positions 75–179 (KKKDLSLEEI…NKELQVELSG (105 aa)) form a coiled coil.

It belongs to the stathmin family. As to quaternary structure, interacts with MAPK8. Interacts with ITM2C. Interacts with KIFBP. Interacts (via the N-terminal region) with CIB1 (via C-terminal region); the interaction is direct, occurs in a calcium-dependent manner and attenuates the neurite outgrowth inhibition of STMN2. In terms of processing, sumoylated. Phosphorylated mostly by MAPK8, but also by MAPK9 and MAPK10 in the developing brain cortex. Post-translationally, N-terminal palmitoylation promotes specific anchoring to the cytosolic leaflet of Golgi membranes and subsequent vesicular trafficking along dendrites and axons. Neuronal Stathmins are substrates for palmitoyltransferases ZDHHC3, ZDHHC7 and ZDHHC15. In terms of tissue distribution, neuron specific.

The protein resides in the cytoplasm. Its subcellular location is the perinuclear region. The protein localises to the cell projection. It is found in the growth cone. It localises to the membrane. The protein resides in the axon. Its subcellular location is the golgi apparatus. The protein localises to the endosome. It is found in the lamellipodium. In terms of biological role, regulator of microtubule stability. When phosphorylated by MAPK8, stabilizes microtubules and consequently controls neurite length in cortical neurons. In the developing brain, negatively regulates the rate of exit from multipolar stage and retards radial migration from the ventricular zone. The sequence is that of Stathmin-2 (STMN2) from Homo sapiens (Human).